The chain runs to 594 residues: Protein FAM200C (594 aa).

This is Protein FAM200C (FAM200C) from Bos taurus (Bovine).